The chain runs to 311 residues: tRNA-cytidine(32) 2-sulfurtransferase (311 aa).

Positions 47–52 (SGGKDS) match the PP-loop motif motif. C122, C125, and C213 together coordinate [4Fe-4S] cluster.

Belongs to the TtcA family. In terms of assembly, homodimer. It depends on Mg(2+) as a cofactor. [4Fe-4S] cluster is required as a cofactor.

The protein resides in the cytoplasm. The catalysed reaction is cytidine(32) in tRNA + S-sulfanyl-L-cysteinyl-[cysteine desulfurase] + AH2 + ATP = 2-thiocytidine(32) in tRNA + L-cysteinyl-[cysteine desulfurase] + A + AMP + diphosphate + H(+). It participates in tRNA modification. Catalyzes the ATP-dependent 2-thiolation of cytidine in position 32 of tRNA, to form 2-thiocytidine (s(2)C32). The sulfur atoms are provided by the cysteine/cysteine desulfurase (IscS) system. In Pectobacterium carotovorum subsp. carotovorum (strain PC1), this protein is tRNA-cytidine(32) 2-sulfurtransferase.